We begin with the raw amino-acid sequence, 521 residues long: NAD(P)H-quinone oxidoreductase subunit 2 (521 aa).

14 helical membrane-spanning segments follow: residues 15–35, 42–62, 79–99, 109–126, 131–153, 167–187, 208–228, 242–262, 276–296, 304–324, 332–352, 376–396, 398–418, and 464–484; these read ILPE…DITF, WTPY…YTQW, LSIV…LMSV, IGEF…AMFL, ELVM…TGYM, LLIG…LYGL, LALV…IAAV, PTPV…ALAI, WQFI…VVAI, MLAY…VIGT, VFYL…VILF, LALS…GFFG, LYLF…LGLI, and VGLV…NPLL.

The protein belongs to the complex I subunit 2 family. As to quaternary structure, NDH-1 can be composed of about 15 different subunits; different subcomplexes with different compositions have been identified which probably have different functions.

The protein localises to the cellular thylakoid membrane. The catalysed reaction is a plastoquinone + NADH + (n+1) H(+)(in) = a plastoquinol + NAD(+) + n H(+)(out). It catalyses the reaction a plastoquinone + NADPH + (n+1) H(+)(in) = a plastoquinol + NADP(+) + n H(+)(out). Functionally, NDH-1 shuttles electrons from an unknown electron donor, via FMN and iron-sulfur (Fe-S) centers, to quinones in the respiratory and/or the photosynthetic chain. The immediate electron acceptor for the enzyme in this species is believed to be plastoquinone. Couples the redox reaction to proton translocation, and thus conserves the redox energy in a proton gradient. Cyanobacterial NDH-1 also plays a role in inorganic carbon-concentration. The chain is NAD(P)H-quinone oxidoreductase subunit 2 from Acaryochloris marina (strain MBIC 11017).